We begin with the raw amino-acid sequence, 218 residues long: Telomere repeats-binding bouquet formation protein 2 (218 aa).

A disordered region spans residues 117–143 (HDRMASSDKENIRPTPEHKQELSKSAE).

It belongs to the TERB2 family. As to quaternary structure, component of the MAJIN-TERB1-TERB2 complex, composed of MAJIN, TERB1 and TERB2. Specifically expressed in germline tissues.

The protein resides in the chromosome. The protein localises to the telomere. Its subcellular location is the nucleus inner membrane. In terms of biological role, meiosis-specific telomere-associated protein involved in meiotic telomere attachment to the nucleus inner membrane, a crucial step for homologous pairing and synapsis. Component of the MAJIN-TERB1-TERB2 complex, which promotes telomere cap exchange by mediating attachment of telomeric DNA to the inner nuclear membrane and replacement of the protective cap of telomeric chromosomes: in early meiosis, the MAJIN-TERB1-TERB2 complex associates with telomeric DNA and the shelterin/telosome complex. During prophase, the complex matures and promotes release of the shelterin/telosome complex from telomeric DNA. The protein is Telomere repeats-binding bouquet formation protein 2 of Mus musculus (Mouse).